A 324-amino-acid chain; its full sequence is Gamma-soluble NSF attachment protein (324 aa).

Polar residues predominate over residues 285–298 (NPTINSTAPQQQYS). The interval 285–324 (NPTINSTAPQQQYSNTTTTTTNNTNNNNPTSQQDDDEDVL) is disordered. The segment covering 299–312 (NTTTTTTNNTNNNN) has biased composition (low complexity).

Belongs to the SNAP family. In terms of assembly, interacts with nsfA and probably SNARE proteins.

It is found in the cytoplasmic vesicle membrane. In terms of biological role, may be required for vesicular transport between the endoplasmic reticulum and the Golgi apparatus. Involved in vesicle fusion with nsfA and probably SNARE proteins. The chain is Gamma-soluble NSF attachment protein (snpC) from Dictyostelium discoideum (Social amoeba).